We begin with the raw amino-acid sequence, 216 residues long: MOB kinase activator 3B (216 aa).

Residues Cys82, Cys87, His164, and His169 each coordinate Zn(2+).

In terms of biological role, modulates LATS1 expression in the Hippo signaling pathway which plays a pivotal role in organ size control and tumor suppression by restricting proliferation and promoting apoptosis. In Mus musculus (Mouse), this protein is MOB kinase activator 3B (Mob3b).